The following is a 399-amino-acid chain: Chorismate synthase (399 aa).

The disordered stretch occupies residues 41 to 72 (IQKDLDRRKPGQSMITTSRGEPDKVTINSGIQ). An NADP(+)-binding site is contributed by arginine 48. FMN contacts are provided by residues 125–127 (RSS), glycine 288, 303–307 (HAPVS), and arginine 330. Composition is skewed to basic and acidic residues over residues 363 to 377 (PDRL…DTDY) and 389 to 399 (ADTHAKTIDDD). The interval 363–399 (PDRLDGRPGEYDTDYHPSSPQNDPEDADTHAKTIDDD) is disordered.

It belongs to the chorismate synthase family. FMNH2 serves as cofactor.

The enzyme catalyses 5-O-(1-carboxyvinyl)-3-phosphoshikimate = chorismate + phosphate. It functions in the pathway metabolic intermediate biosynthesis; chorismate biosynthesis; chorismate from D-erythrose 4-phosphate and phosphoenolpyruvate: step 7/7. In terms of biological role, catalyzes the anti-1,4-elimination of the C-3 phosphate and the C-6 proR hydrogen from 5-enolpyruvylshikimate-3-phosphate (EPSP) to yield chorismate, which is the branch point compound that serves as the starting substrate for the three terminal pathways of aromatic amino acid biosynthesis. This reaction introduces a second double bond into the aromatic ring system. This is Chorismate synthase from Haloarcula marismortui (strain ATCC 43049 / DSM 3752 / JCM 8966 / VKM B-1809) (Halobacterium marismortui).